The primary structure comprises 59 residues: Large ribosomal subunit protein uL30 (59 aa).

It belongs to the universal ribosomal protein uL30 family. In terms of assembly, part of the 50S ribosomal subunit.

The chain is Large ribosomal subunit protein uL30 from Leptospira interrogans serogroup Icterohaemorrhagiae serovar copenhageni (strain Fiocruz L1-130).